The chain runs to 281 residues: Large ribosomal subunit protein uL2 (281 aa).

The tract at residues 222-281 is disordered; that stretch reads TVRGSAMNPNDHPHGGGEGRQPIGRKSPMTPWGKRALGVKTRATKKASNQFIIRRRKETK.

It belongs to the universal ribosomal protein uL2 family. In terms of assembly, part of the 50S ribosomal subunit. Forms a bridge to the 30S subunit in the 70S ribosome.

In terms of biological role, one of the primary rRNA binding proteins. Required for association of the 30S and 50S subunits to form the 70S ribosome, for tRNA binding and peptide bond formation. It has been suggested to have peptidyltransferase activity; this is somewhat controversial. Makes several contacts with the 16S rRNA in the 70S ribosome. The polypeptide is Large ribosomal subunit protein uL2 (Metamycoplasma hominis (strain ATCC 23114 / DSM 25592 / NBRC 14850 / NCTC 10111 / PG21) (Mycoplasma hominis)).